Reading from the N-terminus, the 339-residue chain is Ketol-acid reductoisomerase (NADP(+)) (339 aa).

Residues 1–182 form the KARI N-terminal Rossmann domain; it reads MRVYYDRDAD…GGGRAGIIET (182 aa). NADP(+) is bound by residues 24–27, arginine 48, serine 51, serine 53, and 83–86; these read YGSQ and DELQ. Histidine 108 is a catalytic residue. An NADP(+)-binding site is contributed by glycine 134. The KARI C-terminal knotted domain occupies 183-328; the sequence is TFREECETDL…AKLRDMMPWI (146 aa). 4 residues coordinate Mg(2+): aspartate 191, glutamate 195, glutamate 227, and glutamate 231. Serine 252 contacts substrate.

It belongs to the ketol-acid reductoisomerase family. The cofactor is Mg(2+).

The enzyme catalyses (2R)-2,3-dihydroxy-3-methylbutanoate + NADP(+) = (2S)-2-acetolactate + NADPH + H(+). The catalysed reaction is (2R,3R)-2,3-dihydroxy-3-methylpentanoate + NADP(+) = (S)-2-ethyl-2-hydroxy-3-oxobutanoate + NADPH + H(+). The protein operates within amino-acid biosynthesis; L-isoleucine biosynthesis; L-isoleucine from 2-oxobutanoate: step 2/4. Its pathway is amino-acid biosynthesis; L-valine biosynthesis; L-valine from pyruvate: step 2/4. Involved in the biosynthesis of branched-chain amino acids (BCAA). Catalyzes an alkyl-migration followed by a ketol-acid reduction of (S)-2-acetolactate (S2AL) to yield (R)-2,3-dihydroxy-isovalerate. In the isomerase reaction, S2AL is rearranged via a Mg-dependent methyl migration to produce 3-hydroxy-3-methyl-2-ketobutyrate (HMKB). In the reductase reaction, this 2-ketoacid undergoes a metal-dependent reduction by NADPH to yield (R)-2,3-dihydroxy-isovalerate. This is Ketol-acid reductoisomerase (NADP(+)) from Rhodopseudomonas palustris (strain BisB18).